The sequence spans 379 residues: Tryptophan--tRNA ligase, mitochondrial (379 aa).

Residues Gln-42 and 48–51 (HLGN) contribute to the ATP site. The 'HIGH' region signature appears at 43–51 (PTGCFHLGN). Asp-184 provides a ligand contact to L-tryptophan. ATP contacts are provided by residues 196-198 (GDD), Val-235, 244-248 (KMSKS), and Lys-247. Residues 244–248 (KMSKS) carry the 'KMSKS' region motif.

Belongs to the class-I aminoacyl-tRNA synthetase family. Homodimer.

The protein localises to the mitochondrion matrix. It carries out the reaction tRNA(Trp) + L-tryptophan + ATP = L-tryptophyl-tRNA(Trp) + AMP + diphosphate + H(+). Functionally, mitochondrial aminoacyl-tRNA synthetase that catalyzes the attachment of tryptophan to tRNA(Trp). The protein is Tryptophan--tRNA ligase, mitochondrial (MSW1) of Saccharomyces cerevisiae (strain ATCC 204508 / S288c) (Baker's yeast).